The sequence spans 179 residues: UPF0227 protein Sbal195_2522 (179 aa).

It belongs to the UPF0227 family.

This Shewanella baltica (strain OS195) protein is UPF0227 protein Sbal195_2522.